The following is a 39-amino-acid chain: MAGTGRVPLWLVATVGGIAVITVLGIFIYGSYSGIGSSL.

A helical membrane pass occupies residues 9–29 (LWLVATVGGIAVITVLGIFIY).

It belongs to the PsbJ family. As to quaternary structure, PSII is composed of 1 copy each of membrane proteins PsbA, PsbB, PsbC, PsbD, PsbE, PsbF, PsbH, PsbI, PsbJ, PsbK, PsbL, PsbM, PsbT, PsbX, PsbY, PsbZ, Psb30/Ycf12, at least 3 peripheral proteins of the oxygen-evolving complex and a large number of cofactors. It forms dimeric complexes.

The protein resides in the plastid. It localises to the chloroplast thylakoid membrane. One of the components of the core complex of photosystem II (PSII). PSII is a light-driven water:plastoquinone oxidoreductase that uses light energy to abstract electrons from H(2)O, generating O(2) and a proton gradient subsequently used for ATP formation. It consists of a core antenna complex that captures photons, and an electron transfer chain that converts photonic excitation into a charge separation. This chain is Photosystem II reaction center protein J, found in Gracilaria tenuistipitata var. liui (Red alga).